Consider the following 443-residue polypeptide: Glutamyl-tRNA reductase (443 aa).

Substrate is bound by residues 49–52 (TCNR), Ser-109, 114–116 (ETQ), and Gln-120. Cys-50 serves as the catalytic Nucleophile. 189-194 (GAGKMS) contacts NADP(+).

The protein belongs to the glutamyl-tRNA reductase family. As to quaternary structure, homodimer.

The catalysed reaction is (S)-4-amino-5-oxopentanoate + tRNA(Glu) + NADP(+) = L-glutamyl-tRNA(Glu) + NADPH + H(+). The protein operates within porphyrin-containing compound metabolism; protoporphyrin-IX biosynthesis; 5-aminolevulinate from L-glutamyl-tRNA(Glu): step 1/2. In terms of biological role, catalyzes the NADPH-dependent reduction of glutamyl-tRNA(Glu) to glutamate 1-semialdehyde (GSA). This is Glutamyl-tRNA reductase from Heliobacterium mobile (Heliobacillus mobilis).